A 387-amino-acid polypeptide reads, in one-letter code: MDLFEYQAKELFAKHNVPTTPGRVTDTAEDAKAIAEEIGKPVMVKAQVKVGGRGKAGGVKYAATADDAFTHAQNILGLDIKGHVVKKLLVAEASDIAEEYYISFLLDRANRTYLAMCSVEGGVEIEEVAATKPDRLARIPVDATKGVDEAFAREIAEKGHLPAEVLDAAAVTIAKLWEVFVGEDATLVEVNPLVRTPDDQILALDGKVTLDANADFRHPEHAEFEDRDATDPLELKAKENDLNYVKLDGQVGIIGNGAGLVMSTLDVVAYAGEKHNGVKPANFLDIGGGASAEVMANGLDVILNDSQVKSVFVNVFGGITACDAVANGIVKALEILGEEANKPLVVRLDGNRVEEGRKILADANHPLVVLAQTMDEGADKAAELANK.

Residues 9–236 (KELFAKHNVP…RDATDPLELK (228 aa)) form the ATP-grasp domain. ATP-binding positions include Lys45, 52 to 54 (GRG), Ser94, and Glu99. Mg(2+)-binding residues include Asn191 and Asp205. Residues Asn256 and 318–320 (GIT) each bind substrate.

Belongs to the succinate/malate CoA ligase beta subunit family. Heterotetramer of two alpha and two beta subunits. The cofactor is Mg(2+).

The enzyme catalyses succinate + ATP + CoA = succinyl-CoA + ADP + phosphate. It carries out the reaction GTP + succinate + CoA = succinyl-CoA + GDP + phosphate. It participates in carbohydrate metabolism; tricarboxylic acid cycle; succinate from succinyl-CoA (ligase route): step 1/1. Its function is as follows. Succinyl-CoA synthetase functions in the citric acid cycle (TCA), coupling the hydrolysis of succinyl-CoA to the synthesis of either ATP or GTP and thus represents the only step of substrate-level phosphorylation in the TCA. The beta subunit provides nucleotide specificity of the enzyme and binds the substrate succinate, while the binding sites for coenzyme A and phosphate are found in the alpha subunit. This chain is Succinate--CoA ligase [ADP-forming] subunit beta, found in Mycobacterium sp. (strain JLS).